The following is a 231-amino-acid chain: Urease subunit gamma/beta (231 aa).

A urease gamma region spans residues M1 to P101. The urease beta stretch occupies residues G102–A231.

In the N-terminal section; belongs to the urease gamma subunit family. The protein in the C-terminal section; belongs to the urease beta subunit family. Heterohexamer of 3 UreC (alpha) and 3 UreAB (gamma/beta) subunits.

The protein resides in the cytoplasm. It catalyses the reaction urea + 2 H2O + H(+) = hydrogencarbonate + 2 NH4(+). The protein operates within nitrogen metabolism; urea degradation; CO(2) and NH(3) from urea (urease route): step 1/1. This Pseudomonas syringae pv. tomato (strain ATCC BAA-871 / DC3000) protein is Urease subunit gamma/beta.